The following is a 192-amino-acid chain: MLITVSGPPGSGKSTNAAGLADRLGLDHVSGGDIFREMAAERDMTPVEFNEFAEEDPQIDRDLDRRLHEIATTRDDLVLESRLAGWLSADHADFRFWFDAPVSTRAERIAEREEKPVDRAKAETERREASEKKRYREYYDIDIGDLSIYDAAYNTARWGPERFIDVLVATIDAYDPATDEGKAPIEGVSYDF.

ATP is bound at residue 7–15 (GPPGSGKST).

Belongs to the cytidylate kinase family. Type 2 subfamily.

The protein resides in the cytoplasm. The catalysed reaction is CMP + ATP = CDP + ADP. It catalyses the reaction dCMP + ATP = dCDP + ADP. This chain is Cytidylate kinase, found in Halorubrum lacusprofundi (strain ATCC 49239 / DSM 5036 / JCM 8891 / ACAM 34).